The primary structure comprises 343 residues: Nuclear distribution protein nudE-like 1 (343 aa).

Residues 25–190 (KYKQSFQEAR…LAVRERQQEV (166 aa)) adopt a coiled-coil conformation. 2 disordered regions span residues 184 to 204 (RERQQEVTRKSAPSSPTLDCE) and 322 to 343 (QGTPGLGASRPSSAPGMLPLSV).

It belongs to the nudE family. Phosphorylated in mitosis.

The protein localises to the cytoplasm. Its subcellular location is the cytoskeleton. It is found in the microtubule organizing center. It localises to the centrosome. The protein resides in the spindle. Functionally, required for organization of the cellular microtubule array and microtubule anchoring at the centrosome. Positively regulates the activity of the minus-end directed microtubule motor protein dynein. May enhance dynein-mediated microtubule sliding by targeting dynein to the microtubule plus end. Positively regulates lysosome peripheral distribution and ruffled border formation in osteoclasts. The protein is Nuclear distribution protein nudE-like 1 (NDEL1) of Gallus gallus (Chicken).